Reading from the N-terminus, the 80-residue chain is MMKPLRQQNRPVISYVPRVEPAPPEHAIKMDAFRDVWILRGKYVAFILMGEAFQRSPAFTVPESAQRWANQVRQENEIAE.

It belongs to the CedA family.

Its function is as follows. Activates the cell division inhibited by chromosomal DNA over-replication. The sequence is that of Cell division activator CedA from Citrobacter koseri (strain ATCC BAA-895 / CDC 4225-83 / SGSC4696).